The following is a 156-amino-acid chain: Large ribosomal subunit protein uL22c (156 aa).

The protein belongs to the universal ribosomal protein uL22 family. As to quaternary structure, part of the 50S ribosomal subunit.

It localises to the plastid. It is found in the chloroplast. This protein binds specifically to 23S rRNA. Its function is as follows. The globular domain of the protein is located near the polypeptide exit tunnel on the outside of the subunit, while an extended beta-hairpin is found that lines the wall of the exit tunnel in the center of the 70S ribosome. This Buxus microphylla (Littleleaf boxwood) protein is Large ribosomal subunit protein uL22c (rpl22).